The primary structure comprises 236 residues: UPF0502 protein Bcenmc03_4618 (236 aa).

The protein belongs to the UPF0502 family.

The chain is UPF0502 protein Bcenmc03_4618 from Burkholderia orbicola (strain MC0-3).